Reading from the N-terminus, the 414-residue chain is Succinylornithine transaminase (414 aa).

Residue Lys-260 is modified to N6-(pyridoxal phosphate)lysine.

It belongs to the class-III pyridoxal-phosphate-dependent aminotransferase family. AstC subfamily. It depends on pyridoxal 5'-phosphate as a cofactor.

The catalysed reaction is N(2)-succinyl-L-ornithine + 2-oxoglutarate = N-succinyl-L-glutamate 5-semialdehyde + L-glutamate. It functions in the pathway amino-acid degradation; L-arginine degradation via AST pathway; L-glutamate and succinate from L-arginine: step 3/5. Functionally, catalyzes the transamination of N(2)-succinylornithine and alpha-ketoglutarate into N(2)-succinylglutamate semialdehyde and glutamate. Can also act as an acetylornithine aminotransferase. The protein is Succinylornithine transaminase of Yersinia enterocolitica serotype O:8 / biotype 1B (strain NCTC 13174 / 8081).